A 201-amino-acid polypeptide reads, in one-letter code: 3-isopropylmalate dehydratase small subunit (201 aa).

It belongs to the LeuD family. LeuD type 1 subfamily. Heterodimer of LeuC and LeuD.

It catalyses the reaction (2R,3S)-3-isopropylmalate = (2S)-2-isopropylmalate. The protein operates within amino-acid biosynthesis; L-leucine biosynthesis; L-leucine from 3-methyl-2-oxobutanoate: step 2/4. Functionally, catalyzes the isomerization between 2-isopropylmalate and 3-isopropylmalate, via the formation of 2-isopropylmaleate. This Thermus thermophilus (strain ATCC BAA-163 / DSM 7039 / HB27) protein is 3-isopropylmalate dehydratase small subunit.